Consider the following 119-residue polypeptide: FAD-linked sulfhydryl oxidase (119 aa).

The region spanning 1-97 (MLHWGPKFWR…ISWSEYKNIY (97 aa)) is the ERV/ALR sulfhydryl oxidase domain. The cysteines at positions 44 and 47 are disulfide-linked.

The protein belongs to the asfivirus B119L family. In terms of assembly, interacts with A151R. Requires FAD as cofactor.

The protein localises to the host cytoplasm. Its subcellular location is the virion. The enzyme catalyses 2 R'C(R)SH + O2 = R'C(R)S-S(R)CR' + H2O2. In terms of biological role, FAD-dependent sulfhydryl oxidase that catalyzes the formation of disulfide bonds in viral proteins produced in the cell cytoplasm. The polypeptide is FAD-linked sulfhydryl oxidase (Ornithodoros (relapsing fever ticks)).